The following is a 303-amino-acid chain: Putative fimbrium subunit Fim1C (303 aa).

The first 22 residues, M1–D22, serve as a signal peptide directing secretion.

It belongs to the bacteroidetes fimbrillin superfamily. Mfa-like family. As to quaternary structure, may be part of the fimbrial tip.

It localises to the fimbrium. Functionally, putative component of the fimbrium tip. Fimbriae are filamentous appendages on the cell surface that mediate cell adhesion and biofilm formation. The polypeptide is Putative fimbrium subunit Fim1C (fim1C) (Bacteroides uniformis (strain ATCC 8492 / DSM 6597 / CCUG 4942 / CIP 103695 / JCM 5828 / KCTC 5204 / NCTC 13054 / VPI 0061)).